A 107-amino-acid polypeptide reads, in one-letter code: Iron-binding protein IscA (107 aa).

Fe cation contacts are provided by Cys35, Cys99, and Cys101.

Belongs to the HesB/IscA family. Homodimer; may form tetramers and higher multimers. Requires Fe cation as cofactor.

Functionally, is able to transfer iron-sulfur clusters to apo-ferredoxin. Multiple cycles of [2Fe2S] cluster formation and transfer are observed, suggesting that IscA acts catalytically. Recruits intracellular free iron so as to provide iron for the assembly of transient iron-sulfur cluster in IscU in the presence of IscS, L-cysteine and the thioredoxin reductase system TrxA/TrxB. In Serratia proteamaculans (strain 568), this protein is Iron-binding protein IscA.